The chain runs to 470 residues: 3-isopropylmalate dehydratase large subunit (470 aa).

[4Fe-4S] cluster is bound by residues Cys-349, Cys-409, and Cys-412.

This sequence belongs to the aconitase/IPM isomerase family. LeuC type 1 subfamily. As to quaternary structure, heterodimer of LeuC and LeuD. [4Fe-4S] cluster is required as a cofactor.

It catalyses the reaction (2R,3S)-3-isopropylmalate = (2S)-2-isopropylmalate. Its pathway is amino-acid biosynthesis; L-leucine biosynthesis; L-leucine from 3-methyl-2-oxobutanoate: step 2/4. Catalyzes the isomerization between 2-isopropylmalate and 3-isopropylmalate, via the formation of 2-isopropylmaleate. This Methylobacterium radiotolerans (strain ATCC 27329 / DSM 1819 / JCM 2831 / NBRC 15690 / NCIMB 10815 / 0-1) protein is 3-isopropylmalate dehydratase large subunit.